The sequence spans 341 residues: Thymidine kinase (341 aa).

Gly-19–Thr-26 is an ATP binding site. Residue Glu-48 is the Proton acceptor of the active site. 2 residues coordinate substrate: Tyr-66 and Gln-90. Residue Arg-183 participates in ATP binding. A substrate-binding site is contributed by Arg-189.

It belongs to the herpesviridae thymidine kinase family. Homodimer.

The enzyme catalyses thymidine + ATP = dTMP + ADP + H(+). Catalyzes the transfer of the gamma-phospho group of ATP to thymidine to generate dTMP in the salvage pathway of pyrimidine synthesis. The dTMP serves as a substrate for DNA polymerase during viral DNA replication. Allows the virus to be reactivated and to grow in non-proliferative cells lacking a high concentration of phosphorylated nucleic acid precursors. In Varicella-zoster virus (strain Oka vaccine) (HHV-3), this protein is Thymidine kinase.